Consider the following 331-residue polypeptide: Ketol-acid reductoisomerase (NADP(+)) (331 aa).

Residues 2 to 181 (TKVYYEDAVK…GATRAGVIET (180 aa)) form the KARI N-terminal Rossmann domain. NADP(+) is bound by residues 25 to 28 (YGSQ), arginine 48, serine 52, and 82 to 85 (DETQ). Residue histidine 107 is part of the active site. Glycine 133 contacts NADP(+). The KARI C-terminal knotted domain occupies 182–327 (TFKEETETDL…AELREMMPFV (146 aa)). Aspartate 190, glutamate 194, glutamate 226, and glutamate 230 together coordinate Mg(2+). Serine 251 is a binding site for substrate.

Belongs to the ketol-acid reductoisomerase family. Mg(2+) serves as cofactor.

It carries out the reaction (2R)-2,3-dihydroxy-3-methylbutanoate + NADP(+) = (2S)-2-acetolactate + NADPH + H(+). The catalysed reaction is (2R,3R)-2,3-dihydroxy-3-methylpentanoate + NADP(+) = (S)-2-ethyl-2-hydroxy-3-oxobutanoate + NADPH + H(+). It functions in the pathway amino-acid biosynthesis; L-isoleucine biosynthesis; L-isoleucine from 2-oxobutanoate: step 2/4. It participates in amino-acid biosynthesis; L-valine biosynthesis; L-valine from pyruvate: step 2/4. Functionally, involved in the biosynthesis of branched-chain amino acids (BCAA). Catalyzes an alkyl-migration followed by a ketol-acid reduction of (S)-2-acetolactate (S2AL) to yield (R)-2,3-dihydroxy-isovalerate. In the isomerase reaction, S2AL is rearranged via a Mg-dependent methyl migration to produce 3-hydroxy-3-methyl-2-ketobutyrate (HMKB). In the reductase reaction, this 2-ketoacid undergoes a metal-dependent reduction by NADPH to yield (R)-2,3-dihydroxy-isovalerate. The protein is Ketol-acid reductoisomerase (NADP(+)) of Listeria innocua serovar 6a (strain ATCC BAA-680 / CLIP 11262).